A 171-amino-acid polypeptide reads, in one-letter code: uncharacterized protein (171 aa).

Disordered regions lie at residues 1 to 50 (MSHR…THLS) and 71 to 91 (RIDKDAPKHPYNRRGQQPMMK).

This is an uncharacterized protein from Caenorhabditis elegans.